The chain runs to 545 residues: Luciferin 4-monooxygenase (545 aa).

Positions 543 to 545 (SKL) match the Microbody targeting signal motif.

It belongs to the ATP-dependent AMP-binding enzyme family. Requires Mg(2+) as cofactor.

It is found in the peroxisome. The catalysed reaction is firefly D-luciferin + ATP + O2 = firefly oxyluciferin + hnu + AMP + CO2 + diphosphate. Produces green light with a wavelength of 562 nm. The sequence is that of Luciferin 4-monooxygenase from Photuris pensylvanica (Pennsylania firefly).